The sequence spans 271 residues: 3-methyl-2-oxobutanoate hydroxymethyltransferase (271 aa).

2 residues coordinate Mg(2+): D51 and D90. Residues 51 to 52 (DS), D90, and K118 contribute to the 3-methyl-2-oxobutanoate site. E120 is a Mg(2+) binding site. E186 functions as the Proton acceptor in the catalytic mechanism.

Belongs to the PanB family. In terms of assembly, homodecamer; pentamer of dimers. Requires Mg(2+) as cofactor.

The protein localises to the cytoplasm. It catalyses the reaction 3-methyl-2-oxobutanoate + (6R)-5,10-methylene-5,6,7,8-tetrahydrofolate + H2O = 2-dehydropantoate + (6S)-5,6,7,8-tetrahydrofolate. It functions in the pathway cofactor biosynthesis; (R)-pantothenate biosynthesis; (R)-pantoate from 3-methyl-2-oxobutanoate: step 1/2. Functionally, catalyzes the reversible reaction in which hydroxymethyl group from 5,10-methylenetetrahydrofolate is transferred onto alpha-ketoisovalerate to form ketopantoate. The sequence is that of 3-methyl-2-oxobutanoate hydroxymethyltransferase from Stenotrophomonas maltophilia (strain R551-3).